Reading from the N-terminus, the 220-residue chain is MELYLDTANVAEVERLARIFPIAGVTTNPSIVAASKESIWDVLPRLQNAIGEEGTLFAQTMSRDAKGMVEEAKRLNNAIPGIVVKIPVTAEGLAAINLLKKEGIVTLGTAVYSASQGLLAALAGAKYVAPYVNRVDAQGGDGIRMVQELQTLLEHHAPDSMVLAASFKTPRQALDCLLAGCQAITLPLDVAQQMLNTPAVESAIERFEQDWKNAFGNLNL.

Lys-85 functions as the Schiff-base intermediate with substrate in the catalytic mechanism.

This sequence belongs to the transaldolase family. Type 3A subfamily. As to quaternary structure, homodecamer.

The protein resides in the cytoplasm. It catalyses the reaction beta-D-fructose 6-phosphate = dihydroxyacetone + D-glyceraldehyde 3-phosphate. Catalyzes the reversible formation of fructose 6-phosphate from dihydroxyacetone and D-glyceraldehyde 3-phosphate via an aldolization reaction. The protein is Fructose-6-phosphate aldolase of Salmonella schwarzengrund (strain CVM19633).